Consider the following 192-residue polypeptide: Large ribosomal subunit protein uL10 (192 aa).

It belongs to the universal ribosomal protein uL10 family. Part of the ribosomal stalk of the 50S ribosomal subunit. The N-terminus interacts with L11 and the large rRNA to form the base of the stalk. The C-terminus forms an elongated spine to which L12 dimers bind in a sequential fashion forming a multimeric L10(L12)X complex.

Functionally, forms part of the ribosomal stalk, playing a central role in the interaction of the ribosome with GTP-bound translation factors. This is Large ribosomal subunit protein uL10 from Gloeobacter violaceus (strain ATCC 29082 / PCC 7421).